A 250-amino-acid polypeptide reads, in one-letter code: tRNA (guanine-N(1)-)-methyltransferase (250 aa).

S-adenosyl-L-methionine is bound by residues G116 and 136 to 141 (IGDYVL).

The protein belongs to the RNA methyltransferase TrmD family. As to quaternary structure, homodimer.

The protein localises to the cytoplasm. It carries out the reaction guanosine(37) in tRNA + S-adenosyl-L-methionine = N(1)-methylguanosine(37) in tRNA + S-adenosyl-L-homocysteine + H(+). Specifically methylates guanosine-37 in various tRNAs. This Pseudomonas putida (strain W619) protein is tRNA (guanine-N(1)-)-methyltransferase.